The primary structure comprises 1032 residues: Beta-galactosidase (1032 aa).

N100 and D198 together coordinate substrate. Residue D198 coordinates Na(+). Mg(2+) is bound by residues E413, H415, and E458. Residues E458 and 534–537 (EYAH) each bind substrate. The Proton donor role is filled by E458. The active-site Nucleophile is the E534. N594 lines the Mg(2+) pocket. Na(+) contacts are provided by F598 and N601. Residues N601 and W1006 each coordinate substrate.

Belongs to the glycosyl hydrolase 2 family. Homotetramer. Mg(2+) is required as a cofactor. The cofactor is Na(+).

The enzyme catalyses Hydrolysis of terminal non-reducing beta-D-galactose residues in beta-D-galactosides.. In Vibrio vulnificus (strain CMCP6), this protein is Beta-galactosidase.